Consider the following 185-residue polypeptide: Ribosome-recycling factor (185 aa).

The protein belongs to the RRF family.

It is found in the cytoplasm. In terms of biological role, responsible for the release of ribosomes from messenger RNA at the termination of protein biosynthesis. May increase the efficiency of translation by recycling ribosomes from one round of translation to another. The chain is Ribosome-recycling factor from Pseudomonas fluorescens (strain ATCC BAA-477 / NRRL B-23932 / Pf-5).